The chain runs to 213 residues: N-(5'-phosphoribosyl)anthranilate isomerase (213 aa).

The protein belongs to the TrpF family.

It catalyses the reaction N-(5-phospho-beta-D-ribosyl)anthranilate = 1-(2-carboxyphenylamino)-1-deoxy-D-ribulose 5-phosphate. It participates in amino-acid biosynthesis; L-tryptophan biosynthesis; L-tryptophan from chorismate: step 3/5. The polypeptide is N-(5'-phosphoribosyl)anthranilate isomerase (Caulobacter sp. (strain K31)).